A 523-amino-acid chain; its full sequence is Leucine-rich repeat-containing protein 27 (523 aa).

The interval 1–26 (MEDTSPQAVAEKAAKDPKAAKDLKDD) is disordered. Residues 12–26 (KAAKDPKAAKDLKDD) show a composition bias toward basic and acidic residues. LRR repeat units follow at residues 55 to 76 (SSPV…FKIP), 77 to 98 (NLQQ…FFQL), 101 to 122 (NLTW…IGSH), 124 to 145 (HLKT…LGQV), and 147 to 168 (TLTA…IVQK). Disordered stretches follow at residues 206–236 (QYPV…ADFF) and 372–394 (REQT…HSNM). Basic and acidic residues-rich tracts occupy residues 227-236 (DQEKEKADFF) and 372-385 (REQT…RELS). 2 coiled-coil regions span residues 335–374 (VHAN…WREQ) and 463–494 (MQDI…TLNK). Residues 503 to 523 (GNLSLHPPASQPQNIFFNTKS) are disordered. The span at 513-523 (QPQNIFFNTKS) shows a compositional bias: polar residues.

The protein is Leucine-rich repeat-containing protein 27 (Lrrc27) of Mus musculus (Mouse).